Here is a 219-residue protein sequence, read N- to C-terminus: Transmembrane emp24 domain-containing protein 10 (219 aa).

Residues 1 to 31 (MSGLSGPLSWPGPLLSALLFLFLLGPSSVLG) form the signal peptide. The tract at residues 1–142 (MSGLSGPLSW…KNYEEIAKVE (142 aa)) is required for interaction with STX17. Topologically, residues 32–185 (ISFHLPVNSR…RDTNESTNTR (154 aa)) are lumenal. The region spanning 41–193 (RKCLREEIHK…TRVLYFSIFS (153 aa)) is the GOLD domain. A required for TMED10 and TMED2 cis-Golgi network localization region spans residues 147–178 (LEVELRRLEDLSESIVNDFAYMKKREEEMRDT). A dimethylated arginine mark is found at arginine 171 and arginine 176. An N-linked (GlcNAc...) asparagine glycan is attached at asparagine 179. Residues 186–206 (VLYFSIFSMFCLIGLATWQVF) form a helical membrane-spanning segment. The segment at 204 to 219 (QVFYLRRFFKAKKLIE) is interaction with COPG1. The Cytoplasmic portion of the chain corresponds to 207–219 (YLRRFFKAKKLIE). The tract at residues 207–219 (YLRRFFKAKKLIE) is interaction with ARF1 and IL1B. Residues 211-212 (FF) carry the COPII vesicle coat-binding motif. The short motif at 211–219 (FFKAKKLIE) is the COPI vesicle coat-binding element.

It belongs to the EMP24/GP25L family. In terms of assembly, predominantly dimeric and to a lesser extent monomeric in the ER. Monomer and dimer in ERGIC and cis-Golgi network. Forms homooligomer (via GOLD domain); the assembly is promoted by direct binding with leaderless cargos and may form a protein channel that facilitates cargo entry into the ERGIC. Forms heterooligomeric complexes with other members of the p24 family such as TMED2, TMED7 and TMED9. Interacts (via GOLD domain) with TMED2 (via GOLD domain); the complex is required for export of TMED10 from the ER to the cis-Golgi network; the complex is proposed to be involved in cis-Golgi network dynamics and / or biogenesis. Associates with the COPI vesicle coat subunits (coatomer). Tetramerization of the cytoplasmic domain at the Golgi membrane in vitro; the complex is proposed to interact with COPI coatomer and induce budding of the vesicles. Interacts with COPG1; the interaction involves TMED10 homodimer. Interacts with ARF1 (GDP-bound); the interaction probably involves a TMED10 oligomer. Interacts with SEC23A, SEC24B, SEC24C and SEC24D components of the coat protein complex II/COPII, indicative of an association of TMED10 with the COPII vesicle coat. Interacts with CD59. Interacts with MPPE1/PGAP5; the complex might recruit and sort GPI-anchored proteins to the ER-exit site, or the interaction might lead to recycling of PGAP5 between the ER and the Golgi. Interacts with F2LR1/PAR2. Interacts with KDELR2/ERD2; the interaction is disrupted by KDELR2 ligand. Found in a complex composed at least of SURF4, TMED2 and TMED10. Associates with the presenilin-dependent gamma-secretase complex. Interacts with STX17; the interaction is direct. Interacts with IL-1; the interaction is direct. Interacts with RAB21 (active GTP-bound form); the interaction is indirect and regulates TMED10 abundance and localization at the Golgi. As to expression, ubiquitous.

It localises to the endoplasmic reticulum membrane. Its subcellular location is the endoplasmic reticulum-Golgi intermediate compartment membrane. It is found in the golgi apparatus membrane. The protein localises to the golgi apparatus. The protein resides in the cis-Golgi network membrane. It localises to the trans-Golgi network membrane. Its subcellular location is the cytoplasmic vesicle. It is found in the secretory vesicle membrane. The protein localises to the cell membrane. The protein resides in the melanosome. Its function is as follows. Cargo receptor involved in protein vesicular trafficking and quality control in the endoplasmic reticulum (ER) and Golgi. The p24 protein family is a group of transmembrane proteins that bind coat protein complex I/COPI and coat protein complex II/COPII involved in vesicular trafficking between the membranes. Acts at the lumenal side for incorporation of secretory cargo molecules into transport vesicles and involved in vesicle coat formation at the cytoplasmic side. Mainly functions in the early secretory pathway and cycles between the ER, ER-Golgi intermediate compartment (ERGIC) and Golgi, mediating cargo transport through COPI and COPII-coated vesicles. In COPII vesicle-mediated anterograde transport, involved in the transport of GPI-anchored proteins by acting together with TMED2 as their cargo receptor; the function specifically implies SEC24C and SEC24D of the COPII vesicle coat and lipid raft-like microdomains of the ER. Recognizes GPI anchors structural remodeled in the ER by the GPI inositol-deacylase/PGAP1 and the metallophosphoesterase MPPE1/PGAP5. In COPI vesicle-mediated retrograde transport, involved in the biogenesis of COPI vesicles and vesicle coat recruitment. Involved in trafficking of amyloid beta A4 protein and soluble APP-beta release (independent from the modulation of gamma-secretase activity). Involved in the KDELR2-mediated retrograde transport of the toxin A subunit (CTX-A-K63)together with COPI and the COOH terminus of KDELR2. On Golgi membranes, acts as a primary receptor for ARF1-GDP, a GTP-binding protein involved in COPI-vesicle formation. Increases coatomer-dependent GTPase-activating activity of ARFGAP2 which mediates the hydrolysis of ARF1-bound GTP and therefore modulates protein trafficking from the Golgi apparatus. Involved in the exocytic trafficking of G protein-coupled receptors F2LR1/PAR2 (trypsin and tryspin-like enzyme receptor), OPRM1 (opioid receptor) and P2RY4 (UTD and UDP receptor) from the Golgi to the plasma membrane, thus contributing to receptor resensitization. In addition to its cargo receptor activity, may also act as a protein channel after oligomerization, facilitating the post-translational entry of leaderless cytoplasmic cargo into the ERGIC. Involved in the translocation into ERGIC, the vesicle entry and the secretion of leaderless cargos (lacking the secretion signal sequence), including the mature form of interleukin 1/IL-1 family members, the alpha-crystallin B chain HSPB5, the carbohydrate-binding proteins galectin-1/LGALS1 and galectin-3/LGALS3, the microtubule-associated protein Tau/MAPT, and the annexin A1/ANXA1; the translocation process is dependent on cargo protein unfolding and enhanced by chaperones HSP90AB1 and HSP90B1/GRP9. Could also associates with the presenilin-dependent gamma-secretase complex in order to regulate gamma-cleavages of the amyloid beta A4 protein to yield amyloid-beta 40/Abeta40. This Rattus norvegicus (Rat) protein is Transmembrane emp24 domain-containing protein 10.